Reading from the N-terminus, the 255-residue chain is Glutamate racemase (255 aa).

Substrate contacts are provided by residues 7–8 (DS) and 39–40 (YG). C70 (proton donor/acceptor) is an active-site residue. 71–72 (NT) is a binding site for substrate. The active-site Proton donor/acceptor is C181. 182 to 183 (TH) contributes to the substrate binding site.

The protein belongs to the aspartate/glutamate racemases family.

It carries out the reaction L-glutamate = D-glutamate. It participates in cell wall biogenesis; peptidoglycan biosynthesis. Provides the (R)-glutamate required for cell wall biosynthesis. This Helicobacter pylori (strain G27) protein is Glutamate racemase.